Here is a 20-residue protein sequence, read N- to C-terminus: Unknown protein NF045 from 2D-PAGE (20 aa).

The chain is Unknown protein NF045 from 2D-PAGE from Naegleria fowleri (Brain eating amoeba).